The primary structure comprises 831 residues: Protein translocase subunit SecA (831 aa).

Residues Gln-88, 106–110 (GEGKT), and Asp-495 each bind ATP. 4 residues coordinate Zn(2+): Cys-816, Cys-818, Cys-827, and Cys-828.

This sequence belongs to the SecA family. Monomer and homodimer. Part of the essential Sec protein translocation apparatus which comprises SecA, SecYEG and auxiliary proteins SecDF-YajC and YidC. Zn(2+) is required as a cofactor.

Its subcellular location is the cell membrane. The protein localises to the cytoplasm. The enzyme catalyses ATP + H2O + cellular proteinSide 1 = ADP + phosphate + cellular proteinSide 2.. Part of the Sec protein translocase complex. Interacts with the SecYEG preprotein conducting channel. Has a central role in coupling the hydrolysis of ATP to the transfer of proteins into and across the cell membrane, serving as an ATP-driven molecular motor driving the stepwise translocation of polypeptide chains across the membrane. This is Protein translocase subunit SecA from Lawsonia intracellularis (strain PHE/MN1-00).